Consider the following 20-residue polypeptide: Trypsin inhibitor DE-3 (20 aa).

This sequence belongs to the protease inhibitor I3 (leguminous Kunitz-type inhibitor) family.

In terms of biological role, inhibition of trypsin. The sequence is that of Trypsin inhibitor DE-3 from Erythrina corallodendron (Coral tree).